Consider the following 151-residue polypeptide: Protein ECM12 (151 aa).

Asparagine 2 carries N-linked (GlcNAc...) asparagine glycosylation. The next 2 helical transmembrane spans lie at 17–37 (LLVFYFHIKQQAIMPFFIFFF) and 51–71 (AFLAKHVFVGVCSPFFVVGFF). 2 N-linked (GlcNAc...) asparagine glycosylation sites follow: asparagine 132 and asparagine 137.

The protein localises to the membrane. Functionally, may be involved in cell wall organization and biogenesis. This is Protein ECM12 (ECM12) from Saccharomyces cerevisiae (strain ATCC 204508 / S288c) (Baker's yeast).